We begin with the raw amino-acid sequence, 499 residues long: Glucose-6-phosphate exchanger SLC37A2 (499 aa).

A helical transmembrane segment spans residues 21–40 (YRGFIIVMTFLFYTCYHMSR). N-linked (GlcNAc...) asparagine glycosylation is found at Asn53, Asn62, and Asn66. A run of 11 helical transmembrane segments spans residues 86-106 (GSLDTAFLVSYAIGMFFSGIF), 116-136 (LSGGMIICGIFTSFMGLGYYW), 138-158 (IHALWYYILFQILNGLAQTTG), 187-207 (AVGNILGSLIAGAFVSTAWGL), 208-228 (SFIVPGIIIAAFGIFCFFFLV), 302-322 (LCLLFAKLVSYTFLYWLPLYI), 334-354 (GDLSTLFDVGGIIGGILAGGI), 362-382 (AITCTIMLILTAPMLFIYNYL), 391-411 (VAMLIVCGILVNGPYSLITTA), 434-454 (AIIDGSGSIGAALGPSLAGVL), and 458-478 (GWNYVFYMLIAADICACLLLV).

This sequence belongs to the major facilitator superfamily. Organophosphate:Pi antiporter (OPA) (TC 2.A.1.4) family.

It localises to the endoplasmic reticulum membrane. The enzyme catalyses D-glucose 6-phosphate(in) + phosphate(out) = D-glucose 6-phosphate(out) + phosphate(in). Its function is as follows. Inorganic phosphate and glucose-6-phosphate antiporter. May transport cytoplasmic glucose-6-phosphate into the lumen of the endoplasmic reticulum and translocate inorganic phosphate into the opposite direction. The polypeptide is Glucose-6-phosphate exchanger SLC37A2 (Xenopus tropicalis (Western clawed frog)).